The sequence spans 349 residues: tRNA pseudouridine synthase D (349 aa).

Phenylalanine 27 contacts substrate. Aspartate 80 functions as the Nucleophile in the catalytic mechanism. Asparagine 129 lines the substrate pocket. A TRUD domain is found at 155–303; the sequence is GVPNYFGAQR…VEAARRAMLL (149 aa). Residue phenylalanine 329 participates in substrate binding.

The protein belongs to the pseudouridine synthase TruD family.

It catalyses the reaction uridine(13) in tRNA = pseudouridine(13) in tRNA. In terms of biological role, responsible for synthesis of pseudouridine from uracil-13 in transfer RNAs. This is tRNA pseudouridine synthase D from Escherichia coli O7:K1 (strain IAI39 / ExPEC).